We begin with the raw amino-acid sequence, 274 residues long: Rhamnulose-1-phosphate aldolase (274 aa).

E117 is an active-site residue. Residues H141, H143, and H212 each coordinate Zn(2+).

This sequence belongs to the aldolase class II family. RhaD subfamily. Homotetramer. Requires Zn(2+) as cofactor.

The protein resides in the cytoplasm. The catalysed reaction is L-rhamnulose 1-phosphate = (S)-lactaldehyde + dihydroxyacetone phosphate. It functions in the pathway carbohydrate degradation; L-rhamnose degradation; glycerone phosphate from L-rhamnose: step 3/3. Functionally, catalyzes the reversible cleavage of L-rhamnulose-1-phosphate to dihydroxyacetone phosphate (DHAP) and L-lactaldehyde. This is Rhamnulose-1-phosphate aldolase from Escherichia coli O6:H1 (strain CFT073 / ATCC 700928 / UPEC).